Reading from the N-terminus, the 103-residue chain is MAHYKAADSKREQFRRYLEKSGVLDTLTKVLVALYEEPEKPNSALDFLKHHLGAATPENPEIELLRLELAEIKEKYEAIVEENKKLKAKLAQYEPPQEEKRAE.

This sequence belongs to the AMY1 family. As to quaternary structure, binds via its C-terminal region to the N-terminal region of MYC. Associates with AKAP1/S-AKAP84. Interacts with MYCBPAP. Interacts with CFAP91.

Its subcellular location is the cytoplasm. It localises to the nucleus. Functionally, may control the transcriptional activity of MYC. Stimulates the activation of E box-dependent transcription by MYC. The sequence is that of c-Myc-binding protein (MYCBP) from Pongo abelii (Sumatran orangutan).